Here is a 216-residue protein sequence, read N- to C-terminus: Large ribosomal subunit protein uL3 (216 aa).

Residues 137-157 (GASHGAHKNHRKPGSIGGAST) are disordered.

This sequence belongs to the universal ribosomal protein uL3 family. As to quaternary structure, part of the 50S ribosomal subunit. Forms a cluster with proteins L14 and L19.

Its function is as follows. One of the primary rRNA binding proteins, it binds directly near the 3'-end of the 23S rRNA, where it nucleates assembly of the 50S subunit. The chain is Large ribosomal subunit protein uL3 from Paenarthrobacter aurescens (strain TC1).